A 140-amino-acid chain; its full sequence is Large ribosomal subunit protein uL11 (140 aa).

This sequence belongs to the universal ribosomal protein uL11 family. As to quaternary structure, part of the ribosomal stalk of the 50S ribosomal subunit. Interacts with L10 and the large rRNA to form the base of the stalk. L10 forms an elongated spine to which L12 dimers bind in a sequential fashion forming a multimeric L10(L12)X complex. In terms of processing, one or more lysine residues are methylated.

In terms of biological role, forms part of the ribosomal stalk which helps the ribosome interact with GTP-bound translation factors. The protein is Large ribosomal subunit protein uL11 of Halothermothrix orenii (strain H 168 / OCM 544 / DSM 9562).